The chain runs to 89 residues: Small ribosomal subunit protein bS20 (89 aa).

Residues 68–89 (PNKGARKSSRLDHFVNEQKSKQ) form a disordered region. Residues 76–89 (SRLDHFVNEQKSKQ) show a composition bias toward basic and acidic residues.

Belongs to the bacterial ribosomal protein bS20 family.

Functionally, binds directly to 16S ribosomal RNA. In Mycoplasmopsis agalactiae (strain NCTC 10123 / CIP 59.7 / PG2) (Mycoplasma agalactiae), this protein is Small ribosomal subunit protein bS20.